A 228-amino-acid chain; its full sequence is Ribose-5-phosphate isomerase A (228 aa).

Substrate is bound by residues 29–32 (TGST), 84–87 (DGAD), and 97–100 (KGGG). The active-site Proton acceptor is Glu106. Lys124 contacts substrate.

It belongs to the ribose 5-phosphate isomerase family. In terms of assembly, homodimer.

It carries out the reaction aldehydo-D-ribose 5-phosphate = D-ribulose 5-phosphate. It functions in the pathway carbohydrate degradation; pentose phosphate pathway; D-ribose 5-phosphate from D-ribulose 5-phosphate (non-oxidative stage): step 1/1. Its function is as follows. Catalyzes the reversible conversion of ribose-5-phosphate to ribulose 5-phosphate. The sequence is that of Ribose-5-phosphate isomerase A from Sphingopyxis alaskensis (strain DSM 13593 / LMG 18877 / RB2256) (Sphingomonas alaskensis).